The following is a 330-amino-acid chain: Phenylalanine--tRNA ligase alpha subunit (330 aa).

E254 lines the Mg(2+) pocket.

The protein belongs to the class-II aminoacyl-tRNA synthetase family. Phe-tRNA synthetase alpha subunit type 1 subfamily. In terms of assembly, tetramer of two alpha and two beta subunits. It depends on Mg(2+) as a cofactor.

It localises to the cytoplasm. The enzyme catalyses tRNA(Phe) + L-phenylalanine + ATP = L-phenylalanyl-tRNA(Phe) + AMP + diphosphate + H(+). The sequence is that of Phenylalanine--tRNA ligase alpha subunit (pheS) from Neisseria meningitidis serogroup A / serotype 4A (strain DSM 15465 / Z2491).